We begin with the raw amino-acid sequence, 37 residues long: Potassium channel toxin alpha-KTx 4.8 (37 aa).

Intrachain disulfides connect Cys13/Cys33 and Cys17/Cys35.

This sequence belongs to the short scorpion toxin superfamily. Potassium channel inhibitor family. Alpha-KTx 04 subfamily. In terms of tissue distribution, expressed by the venom gland.

The protein resides in the secreted. In terms of biological role, reversible blocker of voltage-gated potassium channel Kv1.2/KCNA2 (Kd=65 nM) and calcium-activated potassium channels KCa2.2/KCNN2 (Kd=575 nM) and KCa3.1/KCNN4 (Kd=59 nM). The polypeptide is Potassium channel toxin alpha-KTx 4.8 (Centruroides margaritatus (Central American bark Scorpion)).